A 503-amino-acid chain; its full sequence is Cardiolipin synthase (503 aa).

3 consecutive transmembrane segments (helical) span residues Leu-5 to Trp-25, Ile-29 to Phe-49, and Leu-59 to Phe-79. 2 consecutive PLD phosphodiesterase domains span residues Ile-238–Tyr-265 and Thr-416–Ser-443. Active-site residues include His-243, Lys-245, Asp-250, His-421, Lys-423, and Asp-428.

The protein belongs to the phospholipase D family. Cardiolipin synthase subfamily.

The protein resides in the cell membrane. It carries out the reaction 2 a 1,2-diacyl-sn-glycero-3-phospho-(1'-sn-glycerol) = a cardiolipin + glycerol. Its function is as follows. Catalyzes the reversible phosphatidyl group transfer from one phosphatidylglycerol molecule to another to form cardiolipin (CL) (diphosphatidylglycerol) and glycerol. The protein is Cardiolipin synthase (cls) of Halalkalibacterium halodurans (strain ATCC BAA-125 / DSM 18197 / FERM 7344 / JCM 9153 / C-125) (Bacillus halodurans).